Reading from the N-terminus, the 824-residue chain is Leucine--tRNA ligase (824 aa).

Positions 41–51 (PYPSGTLHVGH) match the 'HIGH' region motif. The 'KMSKS' region signature appears at 580 to 584 (KMSKS). Residue Lys583 coordinates ATP.

This sequence belongs to the class-I aminoacyl-tRNA synthetase family.

The protein localises to the cytoplasm. The catalysed reaction is tRNA(Leu) + L-leucine + ATP = L-leucyl-tRNA(Leu) + AMP + diphosphate. This is Leucine--tRNA ligase from Thermotoga petrophila (strain ATCC BAA-488 / DSM 13995 / JCM 10881 / RKU-1).